A 136-amino-acid chain; its full sequence is MRHAYRGRRFNRTAEHRKAMFANMSAALIKHEQIITTLPKAKDLRPVVEKLITLGRIDSVHTRRLAMAQLRDADMVKKLFTVLGPRYKGRPGGYCRIMKAGFRQGDNAPLAVIEFVDRDVDARGKDSGPSQVADAA.

Belongs to the bacterial ribosomal protein bL17 family. As to quaternary structure, part of the 50S ribosomal subunit. Contacts protein L32.

This chain is Large ribosomal subunit protein bL17, found in Methylobacterium radiotolerans (strain ATCC 27329 / DSM 1819 / JCM 2831 / NBRC 15690 / NCIMB 10815 / 0-1).